The chain runs to 465 residues: E3 ubiquitin-protein ligase parkin (465 aa).

A Ubiquitin-like domain is found at 1–76; the sequence is MIVFVRFNSS…VHIVQRPQRK (76 aa). Ser-65 is subject to Phosphoserine; by PINK1. The interval 71–96 is disordered; it reads QRPQRKSHETNASGGDKPQSTPEGSI. The interval 77-237 is necessary for PINK1-dependent localization to mitochondria; sequence SHETNASGGD…LITNNSRSIP (161 aa). Thr-80 carries the phosphothreonine modification. Polar residues predominate over residues 80–93; sequence TNASGGDKPQSTPE. The RING-type 0; atypical zinc finger occupies 141 to 225; the sequence is PTYHSFFVYC…PTSDKDTSVA (85 aa). The residue at position 175 (Thr-175) is a Phosphothreonine; by PINK1. Positions 204 to 238 are SYT11 binding 1; the sequence is TRAEFFFKCGAHPTSDKDTSVALNLITNNSRSIPC. Thr-217 bears the Phosphothreonine mark. The TRIAD supradomain stretch occupies residues 234-465; sequence RSIPCIACTD…ACMGDHWFDV (232 aa). Residues Cys-238, Cys-241, Cys-253, His-257, Cys-260, Cys-263, Cys-289, Cys-293, Cys-332, and Cys-337 each coordinate Zn(2+). Residues 238–293 form an RING-type 1 zinc finger; sequence CIACTDVRNPVLVFQCNHRHVICLDCFHLYCVTRLNDRQFVHDAQLGYSLPCVAGC. The interval 257–293 is SYT11 binding 2; sequence HVICLDCFHLYCVTRLNDRQFVHDAQLGYSLPCVAGC. The IBR-type zinc-finger motif lies at 313–377; sequence NRYQQYGAEE…CKEAYHEGEC (65 aa). Lys-349 is covalently cross-linked (Glycyl lysine isopeptide (Lys-Gly) (interchain with G-Cter in ISG15)). 4 residues coordinate Zn(2+): Cys-352, Cys-360, Cys-365, and Cys-368. Lys-369 participates in a covalent cross-link: Glycyl lysine isopeptide (Lys-Gly) (interchain with G-Cter in ISG15). His-373 and Cys-377 together coordinate Zn(2+). The interval 378 to 410 is REP; sequence DSMFEASGATSQAYRVDQRAAEQARWEEASKET. The Zn(2+) site is built by Cys-418 and Cys-421. Residues 418-449 form an RING-type 2; atypical zinc finger; that stretch reads CPRCNVPIEKNGGCMHMKCPQPQCKLEWCWNC. Cys-431 is an active-site residue. Residues Cys-436, Cys-441, Cys-446, Cys-449, Cys-457, and His-461 each coordinate Zn(2+).

It belongs to the RBR family. Parkin subfamily. Forms an E3 ubiquitin ligase complex with UBE2L3 or UBE2L6. Mediates 'Lys-63'-linked polyubiquitination by associating with UBE2V1. Part of a SCF-like complex, consisting of PRKN, CUL1 and FBXW7. Interacts with SNCAIP. Binds to the C2A and C2B domains of SYT11. Interacts and regulates the turnover of SEPTIN5. Part of a complex, including STUB1, HSP70 and GPR37. The amount of STUB1 in the complex increases during ER stress. STUB1 promotes the dissociation of HSP70 from PRKN and GPR37, thus facilitating PRKN-mediated GPR37 ubiquitination. HSP70 transiently associates with unfolded GPR37 and inhibits the E3 activity of PRKN, whereas, STUB1 enhances the E3 activity of PRKN through promotion of dissociation of HSP70 from PRKN-GPR37 complexes. Interacts with PSMD4 and PACRG. Interacts with LRRK2. Interacts with RANBP2. Interacts with SUMO1 but not SUMO2, which promotes nuclear localization and autoubiquitination. Interacts (via first RING-type domain) with AIMP2 (via N-terminus). Interacts with PSMA7 and RNF41. Interacts with PINK1. Forms a complex with PINK1 and PARK7. Interacts with CHPF, the interaction with isoform 2 may facilitate PRKN transport into the mitochondria. Interacts with MFN2 (phosphorylated), promotes PRKN localization in dysfunctional depolarized mitochondria. Interacts with FBXO7; this promotes translocation to dysfunctional depolarized mitochondria. Interacts with ZNF746. Interacts with heat shock protein 70 family members, including HSPA1L, HSPA1A and HSPA8; interaction HSPA1L promotes translocation to damaged mitochondria. Interacts with BAG4 and, to a lesser extent, BAG5; interaction with BAG4 inhibits translocation to damaged mitochondria. Forms a complex with PRKN and PARK7. Interacts with AMBRA1. In terms of processing, auto-ubiquitinates in an E2-dependent manner leading to its own degradation. Also polyubiquitinated by RNF41 for proteasomal degradation. S-nitrosylated. Post-translationally, phosphorylated. Activation requires phosphorylation at Ser-65 by PINK1 and binding to PINK1 phosphorylated ubiquitin. Phosphorylation at Thr-175 by PINK1 and at Thr-217 is important for mitochondrial localization. Largely confined to neuronal elements, including fibers and neuropil. Highly expressed at the forebrain level, in pyramidal cells of layer V, in various cortical regions and cerebellum. Expressed in the nucleus of diagonal band of Broca, nucleus basalis, bed nucleus of the stria terminalis, and olfactory tubercle. Moderate expression is seen in most neurons of the subthalamic nucleus, heart, skeletal muscle and testis. Moderate expression was found in frontal cortex, parietal cortex, cerebellum, heart, skeletal muscle and testis.

The protein localises to the cytoplasm. The protein resides in the cytosol. It is found in the nucleus. Its subcellular location is the endoplasmic reticulum. It localises to the mitochondrion. The protein localises to the mitochondrion outer membrane. The protein resides in the cell projection. It is found in the neuron projection. Its subcellular location is the postsynaptic density. It localises to the presynapse. It catalyses the reaction [E2 ubiquitin-conjugating enzyme]-S-ubiquitinyl-L-cysteine + [acceptor protein]-L-lysine = [E2 ubiquitin-conjugating enzyme]-L-cysteine + [acceptor protein]-N(6)-ubiquitinyl-L-lysine.. Its pathway is protein modification; protein ubiquitination. In the autoinhibited state the side chain of Phe-463 inserts into a hydrophobic groove in RING-0, occluding the ubiquitin acceptor site Cys-431, whereas the REP repressor element binds RING-1 and blocks its E2-binding site. Activation of PRKN requires 2 steps: (1) phosphorylation at Ser-65 by PINK1 and (2) binding to phosphorylated ubiquitin, leading to unlock repression of the catalytic Cys-431 by the RING-0 region via an allosteric mechanism and converting PRKN to its fully-active form. According to another report, phosphorylation at Ser-65 by PINK1 is not essential for activation and only binding to phosphorylated ubiquitin is essential to unlock repression. In addition, ISG15 conjugation positively regulates its ubiquitin E3 ligase activity by suppressing the intramolecular interaction that maintains its autoinhibited conformation. Functionally, functions within a multiprotein E3 ubiquitin ligase complex, catalyzing the covalent attachment of ubiquitin moieties onto substrate proteins. Substrates include SYT11 and VDAC1. Other substrates are BCL2, CCNE1, GPR37, RHOT1/MIRO1, MFN1, MFN2, STUB1, SNCAIP, SEPTIN5, TOMM20, USP30, ZNF746, MIRO1 and AIMP2. Mediates monoubiquitination as well as 'Lys-6', 'Lys-11', 'Lys-48'-linked and 'Lys-63'-linked polyubiquitination of substrates depending on the context. Participates in the removal and/or detoxification of abnormally folded or damaged protein by mediating 'Lys-63'-linked polyubiquitination of misfolded proteins such as PARK7: 'Lys-63'-linked polyubiquitinated misfolded proteins are then recognized by HDAC6, leading to their recruitment to aggresomes, followed by degradation. Mediates 'Lys-63'-linked polyubiquitination of a 22 kDa O-linked glycosylated isoform of SNCAIP, possibly playing a role in Lewy-body formation. Mediates monoubiquitination of BCL2, thereby acting as a positive regulator of autophagy. Protects against mitochondrial dysfunction during cellular stress, by acting downstream of PINK1 to coordinate mitochondrial quality control mechanisms that remove and replace dysfunctional mitochondrial components. Depending on the severity of mitochondrial damage and/or dysfunction, activity ranges from preventing apoptosis and stimulating mitochondrial biogenesis to regulating mitochondrial dynamics and eliminating severely damaged mitochondria via mitophagy. Activation and recruitment onto the outer membrane of damaged/dysfunctional mitochondria (OMM) requires PINK1-mediated phosphorylation of both PRKN and ubiquitin. After mitochondrial damage, functions with PINK1 to mediate the decision between mitophagy or preventing apoptosis by inducing either the poly- or monoubiquitination of VDAC1, respectively; polyubiquitination of VDAC1 promotes mitophagy, while monoubiquitination of VDAC1 decreases mitochondrial calcium influx which ultimately inhibits apoptosis. When cellular stress results in irreversible mitochondrial damage, promotes the autophagic degradation of dysfunctional depolarized mitochondria (mitophagy) by promoting the ubiquitination of mitochondrial proteins such as TOMM20, RHOT1/MIRO1, MFN1 and USP30. Preferentially assembles 'Lys-6'-, 'Lys-11'- and 'Lys-63'-linked polyubiquitin chains, leading to mitophagy. The PINK1-PRKN pathway also promotes fission of damaged mitochondria by PINK1-mediated phosphorylation which promotes the PRKN-dependent degradation of mitochondrial proteins involved in fission such as MFN2. This prevents the refusion of unhealthy mitochondria with the mitochondrial network or initiates mitochondrial fragmentation facilitating their later engulfment by autophagosomes. Regulates motility of damaged mitochondria via the ubiquitination and subsequent degradation of MIRO1 and MIRO2; in motor neurons, this likely inhibits mitochondrial intracellular anterograde transport along the axons which probably increases the chance of the mitochondria undergoing mitophagy in the soma. Involved in mitochondrial biogenesis via the 'Lys-48'-linked polyubiquitination of transcriptional repressor ZNF746/PARIS which leads to its subsequent proteasomal degradation and allows activation of the transcription factor PPARGC1A. Limits the production of reactive oxygen species (ROS). Regulates cyclin-E during neuronal apoptosis. In collaboration with CHPF isoform 2, may enhance cell viability and protect cells from oxidative stress. Independently of its ubiquitin ligase activity, protects from apoptosis by the transcriptional repression of p53/TP53. May protect neurons against alpha synuclein toxicity, proteasomal dysfunction, GPR37 accumulation, and kainate-induced excitotoxicity. May play a role in controlling neurotransmitter trafficking at the presynaptic terminal and in calcium-dependent exocytosis. May represent a tumor suppressor gene. This is E3 ubiquitin-protein ligase parkin from Rattus norvegicus (Rat).